The chain runs to 276 residues: NH(3)-dependent NAD(+) synthetase (276 aa).

An ATP-binding site is contributed by 43–50; it reads GISGGVDS. Mg(2+) is bound at residue aspartate 49. Residue arginine 146 coordinates deamido-NAD(+). An ATP-binding site is contributed by threonine 166. Glutamate 171 is a Mg(2+) binding site. Lysine 179 and aspartate 186 together coordinate deamido-NAD(+). Residues lysine 195 and threonine 217 each contribute to the ATP site. 266 to 267 contacts deamido-NAD(+); the sequence is HK.

This sequence belongs to the NAD synthetase family. Homodimer.

The enzyme catalyses deamido-NAD(+) + NH4(+) + ATP = AMP + diphosphate + NAD(+) + H(+). It participates in cofactor biosynthesis; NAD(+) biosynthesis; NAD(+) from deamido-NAD(+) (ammonia route): step 1/1. In terms of biological role, catalyzes the ATP-dependent amidation of deamido-NAD to form NAD. Uses ammonia as a nitrogen source. The polypeptide is NH(3)-dependent NAD(+) synthetase (Aliivibrio fischeri (strain ATCC 700601 / ES114) (Vibrio fischeri)).